A 340-amino-acid chain; its full sequence is MYLIEPIRNGEYITDGAIALAMQVYVNQHIFLDEDILFPYYCDPKVEIGRFQNTAIEVNQDYIDKHSIQVVRRDTGGGAVYVDKGAVNMCCILEQDTSIYGDFQRFYQPAIKALHTLGATDVIQSGRNDLTLNGKKVSGAAMTLMNNRIYGGYSLLLDVNYEAMDKVLKPNRKKIASKGIKSVRARVGHLREALDEKYRDITIEEFKNLMVTQILGIDDIKEAKRYELTDADWEAIDELADKKYKNWDWNYGKSPKYEYNRSERLSSGTVDITISVEQNRIADCRIYGDFFGQGDIKDVEEALQGTKMTREDLMHQLKQLDIVYYFGNVTVESLVEMILS.

The 192-residue stretch at 31 to 222 folds into the BPL/LPL catalytic domain; that stretch reads FLDEDILFPY…QILGIDDIKE (192 aa). Residues arginine 73, 78-81, lysine 136, and alanine 140 each bind ATP; that span reads GAVY. Residue lysine 136 participates in (R)-lipoate binding. A coiled-coil region spans residues 293–321; that stretch reads QGDIKDVEEALQGTKMTREDLMHQLKQLD.

This sequence belongs to the LplA family.

It carries out the reaction L-lysyl-[lipoyl-carrier protein] + (R)-lipoate + ATP = N(6)-[(R)-lipoyl]-L-lysyl-[lipoyl-carrier protein] + AMP + diphosphate + H(+). The protein operates within protein modification; protein lipoylation via exogenous pathway; protein N(6)-(lipoyl)lysine from lipoate: step 1/2. Its pathway is protein modification; protein lipoylation via exogenous pathway; protein N(6)-(lipoyl)lysine from lipoate: step 2/2. In terms of biological role, catalyzes specifically the lipoylation of GcvH-L (SAV0324), likely via the ATP-dependent activation of lipoate to lipoyl-AMP and the transfer of the activated lipoyl onto the lipoyl domain of the target protein. Can also utilize lipoamide as substrate for GcvH-L modification. The chain is Lipoate--protein ligase 2 from Staphylococcus aureus (strain Mu50 / ATCC 700699).